The sequence spans 293 residues: Small ribosomal subunit protein uS3 (293 aa).

The region spanning 39–110 (IRREIMKFLK…KISIKIKEVK (72 aa)) is the KH type-2 domain.

Belongs to the universal ribosomal protein uS3 family. As to quaternary structure, part of the 30S ribosomal subunit. Forms a tight complex with proteins S10 and S14.

Functionally, binds the lower part of the 30S subunit head. Binds mRNA in the 70S ribosome, positioning it for translation. The sequence is that of Small ribosomal subunit protein uS3 from Borreliella burgdorferi (strain ATCC 35210 / DSM 4680 / CIP 102532 / B31) (Borrelia burgdorferi).